We begin with the raw amino-acid sequence, 1230 residues long: Ubiquitin carboxyl-terminal hydrolase 15 (1230 aa).

The 141-residue stretch at 39–179 (EDSFTWNIPD…EGTLNITAYV (141 aa)) folds into the MATH domain. The 332-residue stretch at 205 to 536 (VGFRNQGATC…SAYMLVYIRQ (332 aa)) folds into the USP domain. The active-site Nucleophile is the cysteine 214. The active-site Proton acceptor is histidine 465.

Belongs to the peptidase C19 family. As to quaternary structure, interacts with PEX6; promoting association with the PEX1-PEX6 ATPase complex.

It is found in the cytoplasm. Its subcellular location is the cytosol. It localises to the peroxisome. It catalyses the reaction Thiol-dependent hydrolysis of ester, thioester, amide, peptide and isopeptide bonds formed by the C-terminal Gly of ubiquitin (a 76-residue protein attached to proteins as an intracellular targeting signal).. In terms of biological role, deubiquitinase involved in peroxisome import by mediating deubiquitination of the peroxisomal import receptor PEX5. Catalyzes deubiquitination of both monoubiquitiated and polyubiquitinated forms of PEX5 following its retrotranslocation into the cytosol, resetting PEX5 for a subsequent import cycle. This is Ubiquitin carboxyl-terminal hydrolase 15 from Saccharomyces cerevisiae (strain ATCC 204508 / S288c) (Baker's yeast).